We begin with the raw amino-acid sequence, 426 residues long: Selenate reductase subunit C (426 aa).

The next 10 helical transmembrane spans lie at 5-25 (LYFTVLSFIAIVGVISLYIRL), 40-60 (WGLWIVFYIYFIGLSAGSFLL), 78-98 (LALFTAFFSLMAGLLFVLIDL), 119-139 (WEIQFYLIYMLLIVAEIWFLM), 187-207 (ILGIAGIPTAVGVHGGTGSLF), 223-243 (IIFLVSALVSGAALMLFLYSF), 261-281 (LLTLFIGIDLLLMIAEFLIGL), 302-322 (FIFWIGQIGMVIILPILLITI), 330-350 (MGLAGLSVVLGIVCVRWILVI), and 385-405 (VGLIGIVILLFSITVQLVPVF).

This sequence belongs to the NrfD family. In terms of assembly, the complex is composed of three subunits: SrdA, SrdB and SrdC.

The protein localises to the cell membrane. The enzyme catalyses selenite + a quinone + H2O = selenate + a quinol. Functionally, component of the respiratory selenate reductase complex, which catalyzes the reduction of selenate to selenite. This subunit probably receives electrons directly from the membrane quinone pool and transfers the electrons to the iron-sulfur clusters of SrdB. May be the membrane anchor protein subunit of the complex. In Mesobacillus selenatarsenatis (strain DSM 18680 / JCM 14380 / FERM P-15431 / SF-1), this protein is Selenate reductase subunit C.